We begin with the raw amino-acid sequence, 197 residues long: NADH-quinone oxidoreductase subunit B (197 aa).

Positions 76, 77, 141, and 171 each coordinate [4Fe-4S] cluster.

The protein belongs to the complex I 20 kDa subunit family. NDH-1 is composed of 14 different subunits. Subunits NuoB, C, D, E, F, and G constitute the peripheral sector of the complex. Requires [4Fe-4S] cluster as cofactor.

The protein resides in the cell inner membrane. It catalyses the reaction a quinone + NADH + 5 H(+)(in) = a quinol + NAD(+) + 4 H(+)(out). Functionally, NDH-1 shuttles electrons from NADH, via FMN and iron-sulfur (Fe-S) centers, to quinones in the respiratory chain. The immediate electron acceptor for the enzyme in this species is believed to be ubiquinone. Couples the redox reaction to proton translocation (for every two electrons transferred, four hydrogen ions are translocated across the cytoplasmic membrane), and thus conserves the redox energy in a proton gradient. The chain is NADH-quinone oxidoreductase subunit B from Methylobacterium nodulans (strain LMG 21967 / CNCM I-2342 / ORS 2060).